We begin with the raw amino-acid sequence, 1456 residues long: Ig-like and fibronectin type-III domain-containing protein C27B7.7 (1456 aa).

The first 16 residues, Met1 to Cys16, serve as a signal peptide directing secretion. Fibronectin type-III domains are found at residues Asn24–Thr128 and Ile132–Thr227. N-linked (GlcNAc...) asparagine glycans are attached at residues Asn64, Asn146, Asn164, Asn198, and Asn225. Residues Pro236–Asn322 form the Ig-like 1 domain. Cys254 and Cys308 form a disulfide bridge. The region spanning Pro328 to Ile426 is the Fibronectin type-III 3 domain. 3 N-linked (GlcNAc...) asparagine glycosylation sites follow: Asn471, Asn497, and Asn517. 3 consecutive Fibronectin type-III domains span residues Ala531–Gly631, Pro636–Ser736, and Glu737–Thr846. N-linked (GlcNAc...) asparagine glycans are attached at residues Asn658, Asn691, and Asn692. In terms of domain architecture, Ig-like 2 spans Pro841–Arg948. Cys877 and Cys932 form a disulfide bridge. N-linked (GlcNAc...) asparagine glycosylation is found at Asn893, Asn898, Asn969, Asn1091, Asn1120, Asn1133, Asn1151, Asn1207, Asn1268, Asn1277, Asn1298, Asn1350, Asn1357, and Asn1382. In terms of domain architecture, Fibronectin type-III 7 spans Pro955–Thr1050. Fibronectin type-III domains are found at residues Ala1148–Gly1234, Pro1236–Asp1343, and Val1347–Ser1438. Positions Leu1419–Leu1456 are disordered. Low complexity predominate over residues Ile1434–Gly1445.

It is found in the secreted. The sequence is that of Ig-like and fibronectin type-III domain-containing protein C27B7.7 from Caenorhabditis elegans.